The sequence spans 326 residues: Undecaprenyl-phosphate 4-deoxy-4-formamido-L-arabinose transferase (326 aa).

Transmembrane regions (helical) follow at residues 236–256 (LSVVGSVIAVAGFLLAVLLIV) and 270–290 (VFTLFAILFMFIGAQFVAMGL).

This sequence belongs to the glycosyltransferase 2 family.

It localises to the cell inner membrane. The enzyme catalyses UDP-4-deoxy-4-formamido-beta-L-arabinose + di-trans,octa-cis-undecaprenyl phosphate = 4-deoxy-4-formamido-alpha-L-arabinopyranosyl di-trans,octa-cis-undecaprenyl phosphate + UDP. It functions in the pathway glycolipid biosynthesis; 4-amino-4-deoxy-alpha-L-arabinose undecaprenyl phosphate biosynthesis; 4-amino-4-deoxy-alpha-L-arabinose undecaprenyl phosphate from UDP-4-deoxy-4-formamido-beta-L-arabinose and undecaprenyl phosphate: step 1/2. Its pathway is bacterial outer membrane biogenesis; lipopolysaccharide biosynthesis. Functionally, catalyzes the transfer of 4-deoxy-4-formamido-L-arabinose from UDP to undecaprenyl phosphate. The modified arabinose is attached to lipid A and is required for resistance to polymyxin and cationic antimicrobial peptides. The chain is Undecaprenyl-phosphate 4-deoxy-4-formamido-L-arabinose transferase from Proteus mirabilis (strain HI4320).